We begin with the raw amino-acid sequence, 365 residues long: Phosphoserine aminotransferase (365 aa).

Arginine 46 contributes to the L-glutamate binding site. Residues alanine 80 to threonine 81, tryptophan 106, threonine 157, aspartate 177, and glutamine 200 contribute to the pyridoxal 5'-phosphate site. Lysine 201 bears the N6-(pyridoxal phosphate)lysine mark. Residue asparagine 242–threonine 243 participates in pyridoxal 5'-phosphate binding.

The protein belongs to the class-V pyridoxal-phosphate-dependent aminotransferase family. SerC subfamily. Homodimer. The cofactor is pyridoxal 5'-phosphate.

The protein localises to the cytoplasm. The catalysed reaction is O-phospho-L-serine + 2-oxoglutarate = 3-phosphooxypyruvate + L-glutamate. It carries out the reaction 4-(phosphooxy)-L-threonine + 2-oxoglutarate = (R)-3-hydroxy-2-oxo-4-phosphooxybutanoate + L-glutamate. It functions in the pathway amino-acid biosynthesis; L-serine biosynthesis; L-serine from 3-phospho-D-glycerate: step 2/3. It participates in cofactor biosynthesis; pyridoxine 5'-phosphate biosynthesis; pyridoxine 5'-phosphate from D-erythrose 4-phosphate: step 3/5. Functionally, catalyzes the reversible conversion of 3-phosphohydroxypyruvate to phosphoserine and of 3-hydroxy-2-oxo-4-phosphonooxybutanoate to phosphohydroxythreonine. This is Phosphoserine aminotransferase from Leptospira biflexa serovar Patoc (strain Patoc 1 / Ames).